The primary structure comprises 975 residues: Chromosome transmission fidelity protein 18 homolog (975 aa).

Disordered stretches follow at residues 30 to 83 and 114 to 141; these read EGAS…KRQV and SEEMEEPPPPDSSPTDITPPPSPEDLAE. Threonine 51 carries the phosphothreonine modification. Positions 58–77 are enriched in low complexity; sequence RGDAASSPAPAASVGSSQGG. At serine 64 the chain carries Phosphoserine. Residues 122–136 are compositionally biased toward pro residues; the sequence is PPDSSPTDITPPPSP. Position 225 is a phosphoserine (serine 225). Disordered regions lie at residues 246–276 and 320–346; these read SDTLHSLRSGEEEAAQPLGAPEEEPTDGQDA and RPSRKPRPSVEPARVSKEATAPGKWKS. Position 374-381 (374-381) interacts with ATP; the sequence is GPPGLGKT. A disordered region spans residues 858 to 896; sequence ASARVENSPQVDGSPPGLEGLLGGIGEKGVHRPAPRNHE. Position 871 is a phosphoserine (serine 871).

It belongs to the activator 1 small subunits family. CTF18 subfamily. As to quaternary structure, component of the CTF18-RFC complex, which consists of CTF18, CTF8, DCC1, RFC2, RFC3, RFC4 and RFC5. During assembly of the CTF18-RFC complex, CTF18 may first assemble into a subcomplex with RFC2, RFC3, RFC4 and RFC5. CTF18 then interacts directly with CTF8, which in turn interacts with DCC1. The CTF18-RFC complex associates with PCNA and with DNA polymerase POLH. The CTF18-RFC complex does not interact with the Rad9/Rad1/Hus1 complex. CTF18 interacts with SMC1A and RAD21. Interacts with DDX11.

The protein localises to the nucleus. Its function is as follows. Chromosome cohesion factor involved in sister chromatid cohesion and fidelity of chromosome transmission. Component of one of the cell nuclear antigen loader complexes, CTF18-replication factor C (CTF18-RFC), which consists of CTF18, CTF8, DCC1, RFC2, RFC3, RFC4 and RFC5. The CTF18-RFC complex binds to single-stranded and primed DNAs and has weak ATPase activity that is stimulated by the presence of primed DNA, replication protein A (RPA) and by proliferating cell nuclear antigen (PCNA). The CTF18-RFC complex catalyzes the ATP-dependent loading of PCNA onto primed and gapped DNA. Interacts with and stimulates DNA polymerase POLH. During DNA repair synthesis, involved in loading DNA polymerase POLE at the sites of local damage. In Homo sapiens (Human), this protein is Chromosome transmission fidelity protein 18 homolog (CHTF18).